The following is a 180-amino-acid chain: NADH-quinone oxidoreductase subunit I (180 aa).

4Fe-4S ferredoxin-type domains are found at residues 48 to 80 (IVLT…LQKA) and 90 to 119 (EFFR…LTPD). [4Fe-4S] cluster-binding residues include Cys-60, Cys-63, Cys-66, Cys-70, Cys-99, Cys-102, Cys-105, and Cys-109.

It belongs to the complex I 23 kDa subunit family. NDH-1 is composed of 13 different subunits. Subunits NuoA, H, J, K, L, M, N constitute the membrane sector of the complex. [4Fe-4S] cluster is required as a cofactor.

The protein localises to the cell inner membrane. It catalyses the reaction a quinone + NADH + 5 H(+)(in) = a quinol + NAD(+) + 4 H(+)(out). Its function is as follows. NDH-1 shuttles electrons from NADH, via FMN and iron-sulfur (Fe-S) centers, to quinones in the respiratory chain. The immediate electron acceptor for the enzyme in this species is believed to be ubiquinone. Couples the redox reaction to proton translocation (for every two electrons transferred, four hydrogen ions are translocated across the cytoplasmic membrane), and thus conserves the redox energy in a proton gradient. The sequence is that of NADH-quinone oxidoreductase subunit I from Edwardsiella ictaluri (strain 93-146).